A 796-amino-acid chain; its full sequence is Disintegrin and metalloproteinase domain-containing protein B (796 aa).

Residues 1–23 (MKALSCLLAVIATAGSLFQHVDA) form the signal peptide. The Extracellular segment spans residues 24–706 (RSHARDRLNN…VSDWVSRHKP (683 aa)). N-linked (GlcNAc...) asparagine glycans are attached at residues N33, N226, N313, and N407. The region spanning 271–510 (RVALIGVVAD…HSILTNCLTT (240 aa)) is the Peptidase M12B domain. 3 cysteine pairs are disulfide-bonded: C395–C495, C448–C459, and C580–C600. H431 is a binding site for Zn(2+). E432 is a catalytic residue. Zn(2+)-binding residues include H435 and H441. Residues 519-608 (GQQCGNGIVE…DCPRDTHSKN (90 aa)) enclose the Disintegrin domain. The helical transmembrane segment at 707–727 (IVIGVAVGVGCLLLLAILSCI) threads the bilayer. Over 728–796 (CGRSKKRRPR…PGRMPSTRYA (69 aa)) the chain is Cytoplasmic. The interval 737–796 (RNRKMAPINMRPMPPVYNGWTGPPPNAESPGGHPQYNHVPPPINAPPPAYPGRMPSTRYA) is disordered. The segment covering 775–786 (VPPPINAPPPAY) has biased composition (pro residues).

Zn(2+) is required as a cofactor.

The protein resides in the membrane. Probable zinc protease. The chain is Disintegrin and metalloproteinase domain-containing protein B (ADM-B) from Arthroderma otae (strain ATCC MYA-4605 / CBS 113480) (Microsporum canis).